Consider the following 256-residue polypeptide: MIKRVNKLVLGISLLFLVISITAGCDMGKEEEIKKSFEKTLSMYPIKNLEDLYDKEGYRDDQFDKNDKGTWIIGSEMATQNKGEALKVKGMVLYMNRNTRSAKGFYYVNAVKKDEDGRPQDNKIEYPVKMVDNKIIPTKDIKDGNIKKEIENFKFFAQYGTFKDLSKYKDGDISYNPEVPSYSAKYQLTNDDYNVKQLRKRYDIPTNKAPKLLLKGSGDLKGSSVGYKDIEFTFVEKKGENTFFTDSLHLEPSEDK.

An N-terminal signal peptide occupies residues 1–24 (MIKRVNKLVLGISLLFLVISITAG). The N-palmitoyl cysteine moiety is linked to residue C25. C25 is lipidated: S-diacylglycerol cysteine.

This sequence belongs to the staphylococcal tandem lipoprotein family.

It is found in the cell membrane. This is an uncharacterized protein from Staphylococcus aureus.